A 244-amino-acid polypeptide reads, in one-letter code: Mitochondrial import inner membrane translocase subunit Tim21 (244 aa).

A mitochondrion-targeting transit peptide spans 1–18 (MICTLLRAVRCTERLHGC). Residues 69 to 89 (VRSPQSAKEDGSKQVSVHRSQ) form a disordered region. The helical transmembrane segment at 108–128 (FTYLIVVLIGISITGGLFYTI) threads the bilayer.

The protein belongs to the TIM21 family. In terms of assembly, component of the TIM23 complex. Component of the MITRAC (mitochondrial translation regulation assembly intermediate of cytochrome c oxidase complex) complex, the core components of this complex being COA3/MITRAC12 and COX14. Interacts with COA3 and MT-CO1/COX1.

It is found in the mitochondrion membrane. Its function is as follows. Participates in the translocation of transit peptide-containing proteins across the mitochondrial inner membrane. Also required for assembly of mitochondrial respiratory chain complex I and complex IV as component of the MITRAC (mitochondrial translation regulation assembly intermediate of cytochrome c oxidase complex) complex. Probably shuttles between the presequence translocase and respiratory-chain assembly intermediates in a process that promotes incorporation of early nuclear-encoded subunits into these complexes. This is Mitochondrial import inner membrane translocase subunit Tim21 (TIMM21) from Bos taurus (Bovine).